Consider the following 335-residue polypeptide: Ornithine carbamoyltransferase (335 aa).

Carbamoyl phosphate is bound by residues 57–60 (STRT), Arg-108, and 135–138 (HPTQ). L-ornithine is bound by residues Asn-168, Asp-232, and 236-237 (SM). Carbamoyl phosphate contacts are provided by residues 274–275 (CL) and Arg-319.

It belongs to the aspartate/ornithine carbamoyltransferase superfamily. OTCase family.

It is found in the cytoplasm. The enzyme catalyses carbamoyl phosphate + L-ornithine = L-citrulline + phosphate + H(+). It participates in amino-acid degradation; L-arginine degradation via ADI pathway; carbamoyl phosphate from L-arginine: step 2/2. Its function is as follows. Reversibly catalyzes the transfer of the carbamoyl group from carbamoyl phosphate (CP) to the N(epsilon) atom of ornithine (ORN) to produce L-citrulline. The sequence is that of Ornithine carbamoyltransferase from Limosilactobacillus reuteri (strain DSM 20016) (Lactobacillus reuteri).